Here is a 2197-residue protein sequence, read N- to C-terminus: Protein Ycf2 (2197 aa).

1539–1546 (GSIGTGRS) is an ATP binding site.

Belongs to the Ycf2 family.

Its subcellular location is the plastid. The protein resides in the chloroplast stroma. In terms of biological role, probable ATPase of unknown function. Its presence in a non-photosynthetic plant (Epifagus virginiana) and experiments in tobacco indicate that it has an essential function which is probably not related to photosynthesis. The chain is Protein Ycf2 from Ipomoea purpurea (Common morning glory).